Here is a 333-residue protein sequence, read N- to C-terminus: DNA-directed RNA polymerase subunit alpha (333 aa).

The segment at 1–234 (MQISVNEFLT…QQLAAFVDLK (234 aa)) is alpha N-terminal domain (alpha-NTD). An alpha C-terminal domain (alpha-CTD) region spans residues 248–333 (IDPILLRPVD…SLKKDDKATA (86 aa)).

This sequence belongs to the RNA polymerase alpha chain family. In terms of assembly, homodimer. The RNAP catalytic core consists of 2 alpha, 1 beta, 1 beta' and 1 omega subunit. When a sigma factor is associated with the core the holoenzyme is formed, which can initiate transcription.

It catalyses the reaction RNA(n) + a ribonucleoside 5'-triphosphate = RNA(n+1) + diphosphate. Functionally, DNA-dependent RNA polymerase catalyzes the transcription of DNA into RNA using the four ribonucleoside triphosphates as substrates. This is DNA-directed RNA polymerase subunit alpha from Pseudomonas fluorescens (strain Pf0-1).